A 341-amino-acid polypeptide reads, in one-letter code: Limbic system-associated membrane protein (341 aa).

Positions 1 to 28 (MVGRVQPDRKQLPLVLLRLLCLLPTGLP) are cleaved as a signal peptide. Ig-like domains follow at residues 29 to 122 (VRSV…PKTS), 132 to 214 (PKIS…VKVT), and 219 to 304 (PTIT…ASLV). N-linked (GlcNAc...) asparagine glycosylation is found at Asn40 and Asn66. Cys53 and Cys111 are disulfide-bonded. Tyr94 is subject to Phosphotyrosine. Asn136 and Asn148 each carry an N-linked (GlcNAc...) asparagine glycan. 2 cysteine pairs are disulfide-bonded: Cys153-Cys197 and Cys239-Cys290. Residues Asn279, Asn287, and Asn300 are each glycosylated (N-linked (GlcNAc...) asparagine).

The protein belongs to the immunoglobulin superfamily. IgLON family.

Its subcellular location is the cell membrane. Functionally, mediates selective neuronal growth and axon targeting. Contributes to the guidance of developing axons and remodeling of mature circuits in the limbic system. Essential for normal growth of the hippocampal mossy fiber projection. In Mus musculus (Mouse), this protein is Limbic system-associated membrane protein (Lsamp).